The primary structure comprises 255 residues: Hydroxyacylglutathione hydrolase (255 aa).

Zn(2+) contacts are provided by H53, H55, D57, H58, H110, D127, and H165.

This sequence belongs to the metallo-beta-lactamase superfamily. Glyoxalase II family. As to quaternary structure, monomer. It depends on Zn(2+) as a cofactor.

The enzyme catalyses an S-(2-hydroxyacyl)glutathione + H2O = a 2-hydroxy carboxylate + glutathione + H(+). It participates in secondary metabolite metabolism; methylglyoxal degradation; (R)-lactate from methylglyoxal: step 2/2. Functionally, thiolesterase that catalyzes the hydrolysis of S-D-lactoyl-glutathione to form glutathione and D-lactic acid. This Xanthomonas oryzae pv. oryzae (strain MAFF 311018) protein is Hydroxyacylglutathione hydrolase.